An 83-amino-acid chain; its full sequence is Kunitz-type serine protease inhibitor mulgin-4 (83 aa).

The N-terminal stretch at 1-24 (MSSGGLLLLLGLLTLWEGLTPVSS) is a signal peptide. One can recognise a BPTI/Kunitz inhibitor domain in the interval 31–81 (CELPADPGPCNGLFQAFYYNPVQRTCLKFRYGGCKGNPNTFKTIEECKRTC). 3 cysteine pairs are disulfide-bonded: C31–C81, C40–C64, and C56–C77.

The protein belongs to the venom Kunitz-type family. In terms of tissue distribution, expressed by the venom gland.

Its subcellular location is the secreted. Functionally, serine protease inhibitor. This chain is Kunitz-type serine protease inhibitor mulgin-4, found in Pseudechis australis (Mulga snake).